The following is a 203-amino-acid chain: MRGTLYIVAAPSGAGKSSIVNATLARDPKIALSISFTSRAPRPGERHAEHYHFVSADEFQGMIEAGDFFEYALVHGDWKGTARQSVEPQLAAGHDVLLEIDWQGARQVRQKVPDAVSVFILPPSRQALDERMRKRGQDSEVVMAQRLAAAREEMLHFEEFDYVIINETFDTAVSEMCAIFTASRLRRQAQQQRHAGLIRALLD.

In terms of domain architecture, Guanylate kinase-like spans Gly3–Thr181. An ATP-binding site is contributed by Ala10 to Ser17.

This sequence belongs to the guanylate kinase family.

The protein resides in the cytoplasm. It catalyses the reaction GMP + ATP = GDP + ADP. Functionally, essential for recycling GMP and indirectly, cGMP. This chain is Guanylate kinase, found in Xanthomonas axonopodis pv. citri (strain 306).